A 653-amino-acid chain; its full sequence is Leishmanolysin homolog (653 aa).

A signal peptide spans Met1–Ser44. A propeptide spans Ala45–Val113 (activation peptide). Cystine bridges form between Cys138–Cys155 and Cys203–Cys242. His276 is a Zn(2+) binding site. Glu277 is an active-site residue. His280 and His346 together coordinate Zn(2+). Cystine bridges form between Cys326–Cys398, Cys405–Cys468, Cys418–Cys437, Cys427–Cys502, Cys479–Cys524, Cys529–Cys579, and Cys549–Cys572. N-linked (GlcNAc...) asparagine glycans are attached at residues Asn383 and Asn409. A glycan (N-linked (GlcNAc...) asparagine) is linked at Asn569. A disordered region spans residues Glu590 to Ala631. Positions Ser591–Ser600 are enriched in polar residues. The span at Pro607 to Ala631 shows a compositional bias: low complexity. Ser628 carries GPI-anchor amidated serine lipidation. The propeptide at Ala629 to Val653 is removed in mature form.

Belongs to the peptidase M8 family. Requires Zn(2+) as cofactor.

The protein localises to the cell membrane. It catalyses the reaction Preference for hydrophobic residues at P1 and P1' and basic residues at P2' and P3'. A model nonapeptide is cleaved at -Ala-Tyr-|-Leu-Lys-Lys-.. Its function is as follows. Plays an integral role during the infection of macrophages in the mammalian host. The sequence is that of Leishmanolysin homolog (gp63) from Crithidia fasciculata.